Consider the following 405-residue polypeptide: POC1 centriolar protein homolog A (405 aa).

7 WD repeats span residues 17–56 (GHRD…RAYR), 59–98 (GHKD…ESTV), 101–140 (AHTA…FLFS), 143–182 (QHIN…CIHS), 185–224 (EHGG…LLQH), 227–266 (LHSA…LLYT), and 269–308 (GHQG…VDYG). Positions 313-352 (RRPPPLTSSSGTLPKMDLPVPPGRDRSLESVQGEPQESIS) are disordered. Over residues 341 to 352 (ESVQGEPQESIS) the composition is skewed to polar residues. Residues 367 to 395 (QLDILTQTVSILEQRLTLTEDRLKQCLEN) are a coiled coil.

Belongs to the WD repeat POC1 family. Interacts with POC1B. Widely expressed in embryonic and adult tissues.

The protein localises to the cytoplasm. It is found in the cytoskeleton. Its subcellular location is the microtubule organizing center. It localises to the centrosome. The protein resides in the centriole. The protein localises to the cilium basal body. It is found in the spindle pole. Plays an important role in centriole assembly and/or stability and ciliogenesis. Involved in early steps of centriole duplication, as well as in the later steps of centriole length control. Acts in concert with POC1B to ensure centriole integrity and proper mitotic spindle formation. This Mus musculus (Mouse) protein is POC1 centriolar protein homolog A (Poc1a).